The chain runs to 434 residues: Cysteine--tRNA ligase (434 aa).

Cys28 lines the Zn(2+) pocket. Residues 30–40 (PTVYDDIHIGN) carry the 'HIGH' region motif. Zn(2+)-binding residues include Cys207, His232, and Glu236. The short motif at 264 to 268 (KMSKS) is the 'KMSKS' region element. ATP is bound at residue Lys267.

The protein belongs to the class-I aminoacyl-tRNA synthetase family. As to quaternary structure, monomer. Zn(2+) is required as a cofactor.

It is found in the cytoplasm. It carries out the reaction tRNA(Cys) + L-cysteine + ATP = L-cysteinyl-tRNA(Cys) + AMP + diphosphate. The protein is Cysteine--tRNA ligase of Acholeplasma laidlawii (strain PG-8A).